A 189-amino-acid chain; its full sequence is Inosine triphosphate pyrophosphatase (189 aa).

Threonine 8–lysine 13 serves as a coordination point for ITP. Position 39 (glutamate 39) interacts with Mg(2+). ITP is bound by residues lysine 51, aspartate 67 to threonine 68, lysine 84, phenylalanine 143 to aspartate 146, lysine 167, and histidine 172 to arginine 173.

This sequence belongs to the HAM1 NTPase family. As to quaternary structure, homodimer. Requires Mg(2+) as cofactor. The cofactor is Mn(2+).

The protein localises to the cytoplasm. It is found in the nucleus. It carries out the reaction ITP + H2O = IMP + diphosphate + H(+). It catalyses the reaction dITP + H2O = dIMP + diphosphate + H(+). The enzyme catalyses XTP + H2O = XMP + diphosphate + H(+). In terms of biological role, pyrophosphatase that hydrolyzes non-canonical purine nucleotides such as inosine triphosphate (ITP), deoxyinosine triphosphate (dITP) or xanthosine 5'-triphosphate (XTP) to their respective monophosphate derivatives. The enzyme does not distinguish between the deoxy- and ribose forms. Probably excludes non-canonical purines from RNA and DNA precursor pools, thus preventing their incorporation into RNA and DNA and avoiding chromosomal lesions. The protein is Inosine triphosphate pyrophosphatase of Cryptococcus neoformans var. neoformans serotype D (strain JEC21 / ATCC MYA-565) (Filobasidiella neoformans).